A 476-amino-acid polypeptide reads, in one-letter code: E3 SUMO-protein ligase EGR2 (476 aa).

Low complexity predominate over residues Pro-127 to Pro-141. Residues Pro-127 to Ala-178 are disordered. The HCFC1-binding-motif (HBM) signature appears at Asp-162–Tyr-165. Lys-247 carries the post-translational modification N6-acetyllysine; by EP300. 2 disordered regions span residues Gly-275–Ala-300 and Arg-318–Pro-341. Residues Thr-281–Glu-290 show a composition bias toward gly residues. 3 consecutive C2H2-type zinc fingers follow at residues Tyr-340–His-364, Phe-370–His-392, and Phe-398–His-420. The disordered stretch occupies residues Glu-412–Pro-476. Basic residues predominate over residues Arg-415 to Glu-425. Residues Ser-429–Pro-476 show a composition bias toward low complexity.

The protein belongs to the EGR C2H2-type zinc-finger protein family. Interacts with HCFC1. Interacts with WWP2. Interacts with UBC9. Interacts with CITED1. Interacts (via phosphorylated form) with SFN. In terms of processing, ubiquitinated by WWP2 leading to proteasomal degradation. Post-translationally, acetylated at Lys-247. May be deacetylated by HDAC6, HDAC10 or SIRT1.

It localises to the nucleus. Its pathway is protein modification; protein sumoylation. Its function is as follows. Sequence-specific DNA-binding transcription factor. Plays a role in hindbrain segmentation by regulating the expression of a subset of homeobox containing genes and in Schwann cell myelination by regulating the expression of genes involved in the formation and maintenance of myelin. Binds to two EGR2-consensus sites EGR2A (5'-CTGTAGGAG-3') and EGR2B (5'-ATGTAGGTG-3') in the HOXB3 enhancer and promotes HOXB3 transcriptional activation. Binds to specific DNA sites located in the promoter region of HOXA4, HOXB2 and ERBB2. Regulates hindbrain segmentation by controlling the expression of Hox genes, such as HOXA4, HOXB3 and HOXB2, and thereby specifying odd and even rhombomeres. Promotes the expression of HOXB3 in the rhombomere r5 in the hindbrain. Regulates myelination in the peripheral nervous system after birth, possibly by regulating the expression of myelin proteins, such as MPZ, and by promoting the differentiation of Schwann cells. Involved in the development of the jaw openener musculature, probably by playing a role in its innervation through trigeminal motor neurons. May play a role in adipogenesis, possibly by regulating the expression of CEBPB. E3 SUMO-protein ligase helping SUMO1 conjugation to its coregulators NAB1 and NAB2, whose sumoylation down-regulates EGR2 transcriptional activity. The chain is E3 SUMO-protein ligase EGR2 (EGR2) from Homo sapiens (Human).